We begin with the raw amino-acid sequence, 116 residues long: U30-theraphotoxin-Cg1a (116 aa).

A signal peptide spans 1 to 17; it reads MKLCVLTIASLLVTVTS. Positions 18 to 53 are excised as a propeptide; sequence LETQKEIAEGSELTREETPSLVEHKEDEAAAASEKR. The disordered stretch occupies residues 24–46; sequence IAEGSELTREETPSLVEHKEDEA. Disulfide bonds link Cys55–Cys69, Cys62–Cys75, Cys66–Cys112, and Cys68–Cys88.

Belongs to the neurotoxin 03 (Tx2) family. 02 subfamily. HNTX-XV sub-subfamily. Expressed by the venom gland.

The protein resides in the secreted. In terms of biological role, probable ion channel inhibitor. The protein is U30-theraphotoxin-Cg1a of Chilobrachys guangxiensis (Chinese earth tiger tarantula).